The chain runs to 308 residues: Ornithine carbamoyltransferase (308 aa).

Carbamoyl phosphate contacts are provided by residues Arg103 and 130–133 (HPAQ). Residues Asn162, Asp221, and 225 to 226 (SM) contribute to the L-ornithine site. Carbamoyl phosphate is bound by residues 261 to 262 (CL) and Arg289.

This sequence belongs to the aspartate/ornithine carbamoyltransferase superfamily. OTCase family.

The protein resides in the cytoplasm. It catalyses the reaction carbamoyl phosphate + L-ornithine = L-citrulline + phosphate + H(+). It functions in the pathway amino-acid biosynthesis; L-arginine biosynthesis; L-arginine from L-ornithine and carbamoyl phosphate: step 1/3. In terms of biological role, reversibly catalyzes the transfer of the carbamoyl group from carbamoyl phosphate (CP) to the N(epsilon) atom of ornithine (ORN) to produce L-citrulline. In Deinococcus radiodurans (strain ATCC 13939 / DSM 20539 / JCM 16871 / CCUG 27074 / LMG 4051 / NBRC 15346 / NCIMB 9279 / VKM B-1422 / R1), this protein is Ornithine carbamoyltransferase.